We begin with the raw amino-acid sequence, 1257 residues long: MSSIYIGVYKALYDYAAQAEEELNIKQNDLLYLLEKSDIDDWWKVKKRVVATGEEIVDEPSGLVPSTYIEEAPVIKTATALYDYDKQTEEELSFNENDKFNVFDLNDPDWILVGDLAKEKFGFVPSNYIQLDSTAEPAQHQQQQPQQVFQPPPQQQQAIPQQQTQIPINNFPPPPTHKDRTPDFPAPPAHRDRSPEHPPPTPEKDYPRMFEQEPRSLGSRYDRQPEGREEEEDEAPPPMPSRPTGSNIVAPEPVVGRSNTYEQEENVEHSEHSYDGEFFTWYIDEVDGRKKRAIKLSIGQGLVIIKPNTTNPKKLRMRSSSSLDNQWRIKDLITFNNEKKHVFLEFKNPAASLELHAGSKDVAEAIMAILGDLKGAEAAHGLREVAKASKASANERNRKIGRLLYDFEVQGDDELDCKEGDEVYIIDQKKSKDWWMVENIATRRQGVVPSTYIEIISTSNLDKLTDGPLRRKSTKSKGRVVETKDKRSSHHRTREERDRIREKDRAQRDKAPTSQTEQDKSMPNFHRVRTWIDSSGTFKVEAEFLGCVEGKIHLHKTNGVKIAVAADKLSVEDLEYVERVTGTSLEQYKEQVMKQQAKRAKSKSKSGATATPSSTNETKYASSATAAINDIAPPKPTRPQTTTQVSNNGAPLYDWFDFFLECGVDIGNCQRYTLNFEREQMDENILEDISPSLLRTLGLREGDIIRVMKYLDAKFDRKKTPEAPQQNGGLFIDKNGNLKNNSSSTEISKVSADALPSPVKTQVTSFTPVNESTQNNNKIEDDAWAMKPAARSSEDLLKPSPQPQTPQYTGALSDLVNIKPVGTSNENKAKTEQIPVEPSAPALQPMKTSNTAATSSIPPQGPGVTPQRTGTLVPVQKTGGLVPVQRTGAGLVPVQTGGYLPAQPTGFVPITAQPTGFIPIQATGILQPQLTFGIVPLQTGTSTFNANNKTAPPRPDTAPPPITTFGQQPTFQPAFVPLQTGVITMPQTTFGGQSQQLPTQITGGAPPQTSFNQPALVPTQRTGGQITGGFVPQSNFGKQITGGFMDTNTLSFGQQITGNAQQQPPPSTSFGQQITGGLPATSFGQQITGGFPQTSFGQQMTGGAPQTSFGQHITGGNMPNTSFGQPFSQQATSNPFPQMANQFTQQQQYQQQQPVMNQFQQQPQQQQQPFYNQFQSQPNLNQMTNMFQNTSISSPATFNQQIPTTTFGQQPQFEGFGSQPLQSQPTGMGFGNAPLQSQPTGKRANLQAATPDNPFGF.

SH3 domains lie at 4-74 (IYIG…EAPV) and 75-134 (IKTA…LDST). The disordered stretch occupies residues 133–252 (STAEPAQHQQ…PTGSNIVAPE (120 aa)). Over residues 137–169 (PAQHQQQQPQQVFQPPPQQQQAIPQQQTQIPIN) the composition is skewed to low complexity. Basic and acidic residues predominate over residues 189 to 227 (AHRDRSPEHPPPTPEKDYPRMFEQEPRSLGSRYDRQPEG). The SH3 3 domain maps to 396–458 (RNRKIGRLLY…PSTYIEIIST (63 aa)). 6 disordered regions span residues 464–523 (LTDG…KSMP), 596–621 (QAKRAKSKSKSGATATPSSTNETKYA), 718–737 (KKTPEAPQQNGGLFIDKNGN), 789–867 (AARS…VTPQ), 1057–1168 (TGNA…QQQQ), and 1207–1257 (FGQQ…PFGF). Residues 493 to 511 (TREERDRIREKDRAQRDKA) are compositionally biased toward basic and acidic residues. Over residues 605 to 615 (KSGATATPSST) the composition is skewed to low complexity. 4 stretches are compositionally biased toward polar residues: residues 846–858 (MKTSNTAATSSIP), 1057–1075 (TGNAQQQPPPSTSFGQQIT), 1082–1111 (SFGQQITGGFPQTSFGQQMTGGAPQTSFGQ), and 1117–1135 (NMPNTSFGQPFSQQATSNP). A compositionally biased stretch (low complexity) spans 1136-1168 (FPQMANQFTQQQQYQQQQPVMNQFQQQPQQQQQ).

It belongs to the SLA1 family. As to quaternary structure, component of the PAN1 actin cytoskeleton-regulatory complex. Interacts with PAN1 and CLN3. In terms of processing, phosphorylated by the CDC28-CLN3 complex and by PRK1. CDC28-CLN3 phosphorylation regulates cortical actin patch dynamics, as well as PRK1 phosphorylation and SLA1 association with PAN1. Rapidly dephosphorylated upon hyphal induction.

The protein localises to the nucleus. It is found in the cell membrane. The protein resides in the endosome membrane. Its subcellular location is the cytoplasm. It localises to the cytoskeleton. The protein localises to the actin patch. It is found in the cell tip. In terms of biological role, component of the PAN1 actin cytoskeleton-regulatory complex required for the internalization of endosomes during actin-coupled endocytosis. The complex links the site of endocytosis to the cell membrane-associated actin cytoskeleton. Required for assembly of the cortical actin cytoskeleton and for hyphal growth. In Candida albicans (strain SC5314 / ATCC MYA-2876) (Yeast), this protein is Actin cytoskeleton-regulatory complex protein SLA1 (SLA1).